The chain runs to 301 residues: Quinolinate synthase (301 aa).

Residues His21 and Ser38 each coordinate iminosuccinate. [4Fe-4S] cluster is bound at residue Cys83. Residues 109 to 111 (YIN) and Ser126 contribute to the iminosuccinate site. A [4Fe-4S] cluster-binding site is contributed by Cys169. Iminosuccinate contacts are provided by residues 195–197 (HPE) and Thr212. Cys257 contributes to the [4Fe-4S] cluster binding site.

The protein belongs to the quinolinate synthase family. Type 2 subfamily. [4Fe-4S] cluster serves as cofactor.

The protein resides in the cytoplasm. The catalysed reaction is iminosuccinate + dihydroxyacetone phosphate = quinolinate + phosphate + 2 H2O + H(+). It functions in the pathway cofactor biosynthesis; NAD(+) biosynthesis; quinolinate from iminoaspartate: step 1/1. In terms of biological role, catalyzes the condensation of iminoaspartate with dihydroxyacetone phosphate to form quinolinate. The sequence is that of Quinolinate synthase from Clostridium perfringens (strain 13 / Type A).